The chain runs to 412 residues: Gamma-glutamyl phosphate reductase (412 aa).

Belongs to the gamma-glutamyl phosphate reductase family.

It localises to the cytoplasm. The enzyme catalyses L-glutamate 5-semialdehyde + phosphate + NADP(+) = L-glutamyl 5-phosphate + NADPH + H(+). Its pathway is amino-acid biosynthesis; L-proline biosynthesis; L-glutamate 5-semialdehyde from L-glutamate: step 2/2. In terms of biological role, catalyzes the NADPH-dependent reduction of L-glutamate 5-phosphate into L-glutamate 5-semialdehyde and phosphate. The product spontaneously undergoes cyclization to form 1-pyrroline-5-carboxylate. The polypeptide is Gamma-glutamyl phosphate reductase (Bartonella quintana (strain Toulouse) (Rochalimaea quintana)).